The sequence spans 576 residues: Eukaryotic translation initiation factor 3 subunit L (576 aa).

The PCI domain maps to 330–536 (DAIRVFANIL…IHIADTKVAR (207 aa)).

Belongs to the eIF-3 subunit L family. As to quaternary structure, component of the eukaryotic translation initiation factor 3 (eIF-3) complex, which is composed of 13 subunits: eif3a, eif3b, eif3c, eif3d, eif3e, eif3f, eif3g, eif3h, eif3i, eif3j, eif3k, eif3l and eif3m.

The protein resides in the cytoplasm. In terms of biological role, component of the eukaryotic translation initiation factor 3 (eIF-3) complex, which is involved in protein synthesis of a specialized repertoire of mRNAs and, together with other initiation factors, stimulates binding of mRNA and methionyl-tRNAi to the 40S ribosome. The eIF-3 complex specifically targets and initiates translation of a subset of mRNAs involved in cell proliferation. This chain is Eukaryotic translation initiation factor 3 subunit L (eif3l), found in Danio rerio (Zebrafish).